The following is a 210-amino-acid chain: Na(+)-translocating NADH-quinone reductase subunit D (210 aa).

6 helical membrane-spanning segments follow: residues 14 to 34 (PIINNNPIALQILGVCSALAV), 42 to 62 (LVMSLALTVVTAFSNLFISLI), 72 to 92 (IIVQMTIIASLVIVVDQVLQA), 96 to 116 (EIAKQLSVFVGLIITNCIVMG), 131 to 151 (FMDGIGNGLGYGAILLGVGFF), and 178 to 198 (NGLLLLPPSAFFLIGGLIWVI).

The protein belongs to the NqrDE/RnfAE family. In terms of assembly, composed of six subunits; NqrA, NqrB, NqrC, NqrD, NqrE and NqrF.

Its subcellular location is the cell inner membrane. It catalyses the reaction a ubiquinone + n Na(+)(in) + NADH + H(+) = a ubiquinol + n Na(+)(out) + NAD(+). Its function is as follows. NQR complex catalyzes the reduction of ubiquinone-1 to ubiquinol by two successive reactions, coupled with the transport of Na(+) ions from the cytoplasm to the periplasm. NqrA to NqrE are probably involved in the second step, the conversion of ubisemiquinone to ubiquinol. This chain is Na(+)-translocating NADH-quinone reductase subunit D, found in Shewanella denitrificans (strain OS217 / ATCC BAA-1090 / DSM 15013).